We begin with the raw amino-acid sequence, 310 residues long: Methionyl-tRNA formyltransferase (310 aa).

A (6S)-5,6,7,8-tetrahydrofolate-binding site is contributed by 109 to 112 (SLLP).

The protein belongs to the Fmt family.

The enzyme catalyses L-methionyl-tRNA(fMet) + (6R)-10-formyltetrahydrofolate = N-formyl-L-methionyl-tRNA(fMet) + (6S)-5,6,7,8-tetrahydrofolate + H(+). Attaches a formyl group to the free amino group of methionyl-tRNA(fMet). The formyl group appears to play a dual role in the initiator identity of N-formylmethionyl-tRNA by promoting its recognition by IF2 and preventing the misappropriation of this tRNA by the elongation apparatus. This Pseudomonas paraeruginosa (strain DSM 24068 / PA7) (Pseudomonas aeruginosa (strain PA7)) protein is Methionyl-tRNA formyltransferase.